The following is a 157-amino-acid chain: Small ribosomal subunit protein uS7 (157 aa).

The protein belongs to the universal ribosomal protein uS7 family. As to quaternary structure, part of the 30S ribosomal subunit. Contacts proteins S9 and S11.

Its function is as follows. One of the primary rRNA binding proteins, it binds directly to 16S rRNA where it nucleates assembly of the head domain of the 30S subunit. Is located at the subunit interface close to the decoding center, probably blocks exit of the E-site tRNA. This Francisella tularensis subsp. tularensis (strain FSC 198) protein is Small ribosomal subunit protein uS7.